We begin with the raw amino-acid sequence, 115 residues long: Large ribosomal subunit protein uL24 (115 aa).

The protein belongs to the universal ribosomal protein uL24 family. Part of the 50S ribosomal subunit.

Functionally, one of two assembly initiator proteins, it binds directly to the 5'-end of the 23S rRNA, where it nucleates assembly of the 50S subunit. One of the proteins that surrounds the polypeptide exit tunnel on the outside of the subunit. In Acaryochloris marina (strain MBIC 11017), this protein is Large ribosomal subunit protein uL24.